Reading from the N-terminus, the 710-residue chain is uncharacterized protein (710 aa).

The segment at 1 to 20 (MKQRQARLIGTPSQTRRQQE) is disordered. A coiled-coil region spans residues 13–42 (SQTRRQQELAEKLEKVKEVLEDEKKRQFNE).

This sequence belongs to the IIV-6 268L family.

This is an uncharacterized protein from Invertebrate iridescent virus 6 (IIV-6).